Here is a 130-residue protein sequence, read N- to C-terminus: Glycine cleavage system H protein (130 aa).

Residues 24 to 106 (EYTVGITEHA…YHEGWLFRIK (83 aa)) enclose the Lipoyl-binding domain. Lys-65 is modified (N6-lipoyllysine).

It belongs to the GcvH family. In terms of assembly, the glycine cleavage system is composed of four proteins: P, T, L and H. (R)-lipoate is required as a cofactor.

The glycine cleavage system catalyzes the degradation of glycine. The H protein shuttles the methylamine group of glycine from the P protein to the T protein. In Photorhabdus laumondii subsp. laumondii (strain DSM 15139 / CIP 105565 / TT01) (Photorhabdus luminescens subsp. laumondii), this protein is Glycine cleavage system H protein.